A 273-amino-acid chain; its full sequence is Imidazole glycerol phosphate synthase subunit HisF (273 aa).

Residues Asp-11 and Asp-134 contribute to the active site.

This sequence belongs to the HisA/HisF family. In terms of assembly, heterodimer of HisH and HisF.

It localises to the cytoplasm. It catalyses the reaction 5-[(5-phospho-1-deoxy-D-ribulos-1-ylimino)methylamino]-1-(5-phospho-beta-D-ribosyl)imidazole-4-carboxamide + L-glutamine = D-erythro-1-(imidazol-4-yl)glycerol 3-phosphate + 5-amino-1-(5-phospho-beta-D-ribosyl)imidazole-4-carboxamide + L-glutamate + H(+). It functions in the pathway amino-acid biosynthesis; L-histidine biosynthesis; L-histidine from 5-phospho-alpha-D-ribose 1-diphosphate: step 5/9. IGPS catalyzes the conversion of PRFAR and glutamine to IGP, AICAR and glutamate. The HisF subunit catalyzes the cyclization activity that produces IGP and AICAR from PRFAR using the ammonia provided by the HisH subunit. In Methanosarcina acetivorans (strain ATCC 35395 / DSM 2834 / JCM 12185 / C2A), this protein is Imidazole glycerol phosphate synthase subunit HisF.